The primary structure comprises 208 residues: Large ribosomal subunit protein bL17 (208 aa).

Residues 122 to 208 (TEKKKKKPAK…ASEEAPPKTE (87 aa)) are disordered. Residues 151–179 (ADTPAPAAEESAPAKAAEPEAEAAAPEAE) are compositionally biased toward low complexity.

This sequence belongs to the bacterial ribosomal protein bL17 family. In terms of assembly, part of the 50S ribosomal subunit. Contacts protein L32.

The chain is Large ribosomal subunit protein bL17 from Desulfosudis oleivorans (strain DSM 6200 / JCM 39069 / Hxd3) (Desulfococcus oleovorans).